A 492-amino-acid polypeptide reads, in one-letter code: Mitochondrial distribution and morphology protein 12 (492 aa).

Residues methionine 1–valine 492 form the SMP-LTD domain. Disordered regions lie at residues aspartate 68 to glycine 158, leucine 199 to arginine 301, and alanine 379 to asparagine 434. Over residues valine 78 to valine 90 the composition is skewed to acidic residues. Over residues serine 130 to methionine 139 the composition is skewed to gly residues. Residues leucine 246–serine 257 show a composition bias toward low complexity. Residues threonine 270–glutamate 285 are compositionally biased toward polar residues. Over residues glycine 387–glycine 400 the composition is skewed to low complexity. Residues glutamine 401 to proline 415 are compositionally biased toward gly residues. A compositionally biased stretch (low complexity) spans glycine 416 to glycine 428.

Belongs to the MDM12 family. In terms of assembly, component of the ER-mitochondria encounter structure (ERMES) or MDM complex, composed of MMM1, MDM10, MDM12 and MDM34. An MMM1 homodimer associates with one molecule of MDM12 on each side in a pairwise head-to-tail manner, and the SMP-LTD domains of MMM1 and MDM12 generate a continuous hydrophobic tunnel for phospholipid trafficking.

It is found in the mitochondrion outer membrane. The protein localises to the endoplasmic reticulum membrane. In terms of biological role, component of the ERMES/MDM complex, which serves as a molecular tether to connect the endoplasmic reticulum (ER) and mitochondria. Components of this complex are involved in the control of mitochondrial shape and protein biogenesis, and function in nonvesicular lipid trafficking between the ER and mitochondria. MDM12 is required for the interaction of the ER-resident membrane protein MMM1 and the outer mitochondrial membrane-resident beta-barrel protein MDM10. The MDM12-MMM1 subcomplex functions in the major beta-barrel assembly pathway that is responsible for biogenesis of all mitochondrial outer membrane beta-barrel proteins, and acts in a late step after the SAM complex. The MDM10-MDM12-MMM1 subcomplex further acts in the TOM40-specific pathway after the action of the MDM12-MMM1 complex. Essential for establishing and maintaining the structure of mitochondria and maintenance of mtDNA nucleoids. The sequence is that of Mitochondrial distribution and morphology protein 12 from Chaetomium globosum (strain ATCC 6205 / CBS 148.51 / DSM 1962 / NBRC 6347 / NRRL 1970) (Soil fungus).